Consider the following 356-residue polypeptide: Histidinol-phosphate aminotransferase (356 aa).

Lys214 is modified (N6-(pyridoxal phosphate)lysine).

The protein belongs to the class-II pyridoxal-phosphate-dependent aminotransferase family. Histidinol-phosphate aminotransferase subfamily. In terms of assembly, homodimer. Pyridoxal 5'-phosphate is required as a cofactor.

It carries out the reaction L-histidinol phosphate + 2-oxoglutarate = 3-(imidazol-4-yl)-2-oxopropyl phosphate + L-glutamate. It functions in the pathway amino-acid biosynthesis; L-histidine biosynthesis; L-histidine from 5-phospho-alpha-D-ribose 1-diphosphate: step 7/9. The protein is Histidinol-phosphate aminotransferase of Shigella flexneri serotype 5b (strain 8401).